A 488-amino-acid polypeptide reads, in one-letter code: Glycogen synthase (488 aa).

Lys-17 is an ADP-alpha-D-glucose binding site.

Belongs to the glycosyltransferase 1 family. Bacterial/plant glycogen synthase subfamily.

The enzyme catalyses [(1-&gt;4)-alpha-D-glucosyl](n) + ADP-alpha-D-glucose = [(1-&gt;4)-alpha-D-glucosyl](n+1) + ADP + H(+). The protein operates within glycan biosynthesis; glycogen biosynthesis. Synthesizes alpha-1,4-glucan chains using ADP-glucose. This is Glycogen synthase from Nitratidesulfovibrio vulgaris (strain DSM 19637 / Miyazaki F) (Desulfovibrio vulgaris).